The chain runs to 150 residues: UPF0178 protein Bpet3884 (150 aa).

This sequence belongs to the UPF0178 family.

The polypeptide is UPF0178 protein Bpet3884 (Bordetella petrii (strain ATCC BAA-461 / DSM 12804 / CCUG 43448)).